The primary structure comprises 399 residues: Elongation factor Tu (399 aa).

A tr-type G domain is found at 10-207 (KPHMNVGTIG…AMDTYFPDPV (198 aa)). The G1 stretch occupies residues 19–26 (GQIDHGKT). GTP is bound at residue 19–26 (GQIDHGKT). Thr26 contributes to the Mg(2+) binding site. The segment at 60–64 (GITIN) is G2. Positions 81 to 84 (DCPG) are G3. GTP is bound by residues 81–85 (DCPGH) and 136–139 (NKVD). The G4 stretch occupies residues 136–139 (NKVD). The G5 stretch occupies residues 173-175 (SAL).

The protein belongs to the TRAFAC class translation factor GTPase superfamily. Classic translation factor GTPase family. EF-Tu/EF-1A subfamily. Monomer.

The protein localises to the cytoplasm. The catalysed reaction is GTP + H2O = GDP + phosphate + H(+). In terms of biological role, GTP hydrolase that promotes the GTP-dependent binding of aminoacyl-tRNA to the A-site of ribosomes during protein biosynthesis. The chain is Elongation factor Tu from Fervidobacterium islandicum.